Consider the following 466-residue polypeptide: Lipase 2 (466 aa).

The signal sequence occupies residues M1–A16. A disulfide bridge links C112 with C285. S196 serves as the catalytic Charge relay system. N-linked (GlcNAc...) asparagine glycosylation is found at N231, N319, and N331. Catalysis depends on charge relay system residues D348 and H381. An intrachain disulfide couples C364 to C409. Residues N422 and N451 are each glycosylated (N-linked (GlcNAc...) asparagine).

Belongs to the AB hydrolase superfamily. Lipase family. Class Lip subfamily.

Its subcellular location is the secreted. The enzyme catalyses a triacylglycerol + H2O = a diacylglycerol + a fatty acid + H(+). Secreted lipase that is able to hydrolyze both the neutral triacylglycerols and the monopalmitate ester Tween 40, allowing the use of hydrolyzed products as carbon sources. Has broad lipolytic activity, which may be important for colonization and subsequent infection, therefore contributing to the persistence and virulence in human tissue. My be important for alimentary tract colonization, but not oral infection. Facilitates invasive disease via lipid-based suppression of the IL-17 response. Inhibits IL-17 production indirectly by suppressing IL-23 production by tissue-resident dendritic cells. This Candida albicans (strain SC5314 / ATCC MYA-2876) (Yeast) protein is Lipase 2.